Reading from the N-terminus, the 849-residue chain is MAP7 domain-containing protein 1 (849 aa).

Disordered stretches follow at residues Met-1–Arg-151 and Glu-186–Lys-210. A compositionally biased stretch (pro residues) spans Glu-24–Pro-41. Phosphothreonine occurs at positions 49 and 53. 2 positions are modified to phosphoserine: Ser-72 and Ser-95. At Thr-99 the chain carries Phosphothreonine. Phosphoserine is present on residues Ser-115 and Ser-118. Position 120 is a phosphothreonine (Thr-120). Ser-125 and Ser-127 each carry phosphoserine. Positions Gln-132–Arg-151 are enriched in basic and acidic residues. The stretch at Glu-167–Lys-223 forms a coiled coil. Ser-256, Ser-275, Ser-315, Ser-368, and Ser-401 each carry phosphoserine. The segment at Thr-318–Asp-815 is disordered. Residues Arg-407–Arg-437 are compositionally biased toward basic and acidic residues. A phosphoserine mark is found at Ser-444, Ser-448, Ser-454, and Ser-460. Polar residues predominate over residues Ala-457–Trp-474. A Glycyl lysine isopeptide (Lys-Gly) (interchain with G-Cter in SUMO2) cross-link involves residue Lys-462. Residues Ser-479 and Ser-496 each carry the phosphoserine modification. The segment covering Ser-479 to Pro-497 has biased composition (pro residues). A compositionally biased stretch (basic and acidic residues) spans Pro-523–Pro-539. Residues Pro-542–Ala-556 show a composition bias toward pro residues. A phosphoserine mark is found at Ser-544, Ser-548, and Ser-552. Thr-554 carries the post-translational modification Phosphothreonine. The span at Pro-568–Phe-582 shows a compositional bias: low complexity. A coiled-coil region spans residues Thr-602–Ile-724. Positions Thr-603 to Glu-743 are enriched in basic and acidic residues.

This sequence belongs to the MAP7 family.

The protein localises to the cytoplasm. Its subcellular location is the cytoskeleton. The protein resides in the spindle. It is found in the microtubule organizing center. It localises to the centrosome. The protein localises to the midbody. Functionally, microtubule-stabilizing protein involved in the control of cell motility and neurite outgrowth. Facilitate microtubule stabilization through the maintenance of acetylated stable microtubules. This is MAP7 domain-containing protein 1 (Map7d1) from Rattus norvegicus (Rat).